Reading from the N-terminus, the 143-residue chain is Histone H2B (143 aa).

Residues 1–52 (MAPKPASTAGKAPASTASKAPVKSDAAKTASKSKVSSGADGEKKKRKKTRKE) are disordered. Residue Lys11 is modified to N6-acetyllysine; alternate. Lys11 participates in a covalent cross-link: Glycyl lysine isopeptide (Lys-Gly) (interchain with G-Cter in SUMO); alternate. Ser15 carries the phosphoserine modification. Lys19 carries the N6-acetyllysine modification. The span at 23–39 (KSDAAKTASKSKVSSGA) shows a compositional bias: low complexity. Lys137 is covalently cross-linked (Glycyl lysine isopeptide (Lys-Gly) (interchain with G-Cter in ubiquitin)).

Belongs to the histone H2B family. As to quaternary structure, the nucleosome is a histone octamer containing two molecules each of H2A, H2B, H3 and H4 assembled in one H3-H4 heterotetramer and two H2A-H2B heterodimers. The octamer wraps approximately 147 bp of DNA. Monoubiquitinated to form H2BK123ub1. H2BK123ub1 gives a specific tag for epigenetic transcriptional activation and is also prerequisite for H3K4me and H3K79me formation. H2BK123ub1 also modulates the formation of double-strand breaks during meiosis and is a prerequisite for DNA-damage checkpoint activation. Post-translationally, phosphorylated to form H2BS10ph during progression through meiotic prophase. May be correlated with chromosome condensation. In terms of processing, acetylation of N-terminal lysines and particularly formation of H2BK11ac has a positive effect on transcription. Sumoylation to form H2BK6su occurs preferentially near the telomeres and represses gene transcription.

It localises to the nucleus. Its subcellular location is the chromosome. Functionally, core component of nucleosome. Nucleosomes wrap and compact DNA into chromatin, limiting DNA accessibility to the cellular machineries which require DNA as a template. Histones thereby play a central role in transcription regulation, DNA repair, DNA replication and chromosomal stability. DNA accessibility is regulated via a complex set of post-translational modifications of histones, also called histone code, and nucleosome remodeling. The polypeptide is Histone H2B (htbA) (Agaricus bisporus (White button mushroom)).